Consider the following 335-residue polypeptide: Phosphate acyltransferase (335 aa).

This sequence belongs to the PlsX family. Homodimer. Probably interacts with PlsY.

It is found in the cytoplasm. It carries out the reaction a fatty acyl-[ACP] + phosphate = an acyl phosphate + holo-[ACP]. Its pathway is lipid metabolism; phospholipid metabolism. Its function is as follows. Catalyzes the reversible formation of acyl-phosphate (acyl-PO(4)) from acyl-[acyl-carrier-protein] (acyl-ACP). This enzyme utilizes acyl-ACP as fatty acyl donor, but not acyl-CoA. This chain is Phosphate acyltransferase, found in Streptococcus pyogenes serotype M6 (strain ATCC BAA-946 / MGAS10394).